Reading from the N-terminus, the 229-residue chain is Germin-like protein 3-6 (229 aa).

An N-terminal signal peptide occupies residues 1 to 31; it reads MEHSFKTIAAGVVIVVLLLQQAPVLIRATDA. Cysteines 38 and 53 form a disulfide. In terms of domain architecture, Cupin type-1 spans 67-219; it reads SKIATGGDVN…ALRVDAGVVE (153 aa). N-linked (GlcNAc...) asparagine glycans are attached at residues N80 and N83. Mn(2+)-binding residues include H116, H118, E123, and H165.

This sequence belongs to the germin family. As to quaternary structure, oligomer (believed to be a pentamer but probably hexamer).

The protein localises to the secreted. The protein resides in the extracellular space. Its subcellular location is the apoplast. Its function is as follows. May play a role in plant defense. Probably has no oxalate oxidase activity even if the active site is conserved. In Oryza sativa subsp. japonica (Rice), this protein is Germin-like protein 3-6.